The following is a 581-amino-acid chain: Tail sheath protein (581 aa).

The protein belongs to the myoviridae tail sheath protein family. Homomultimer.

It is found in the virion. It localises to the host cytoplasm. Functionally, polymerizes as an extended structure around the baseplate-tail tube complex. During ejection, the sheath shifts to a contracted form, thereby making the inner tail tube protrude through the host cell envelope. This is Tail sheath protein from Mycobacterium phage Bxz1 (Mycobacteriophage Bxz1).